We begin with the raw amino-acid sequence, 164 residues long: 17.8 kDa heat shock protein (164 aa).

Positions 20–154 constitute a sHSP domain; the sequence is VVAGEARPPM…HAGNGKAAGD (135 aa). A disordered region spans residues 68–93; that stretch reads GEHEDANNAAKAGKASGEEEEENDGV.

Belongs to the small heat shock protein (HSP20) family. As to quaternary structure, may form oligomeric structures.

It localises to the cytoplasm. This Oryza sativa subsp. japonica (Rice) protein is 17.8 kDa heat shock protein (HSP17.8).